Here is a 511-residue protein sequence, read N- to C-terminus: Probable cytochrome P450 4ac2 (511 aa).

Positions 318 and 455 each coordinate heme.

Belongs to the cytochrome P450 family. It depends on heme as a cofactor.

The protein resides in the endoplasmic reticulum membrane. It is found in the microsome membrane. Functionally, may be involved in the metabolism of insect hormones and in the breakdown of synthetic insecticides. The sequence is that of Probable cytochrome P450 4ac2 (Cyp4ac2) from Drosophila melanogaster (Fruit fly).